The sequence spans 407 residues: MKRAFIMVLDSFGIGSSKDAEKFGDKGSDTLGHIAEACFRGEADKGRKGPLHLPNLTALGLGKAAEASSGKFPPGLDKNAEIIGAYAYASELSSGKDTPSGHWEIAGVPVLFDWGYFSDTENSFPQELLDLLVEKANLPGYLGNCHSSGTVILDQLGAEHMKSGKPIFYTSADSVFQIACHEETFGLERLYALCEIAREALTEGGYNIGRVIARPFVGDKPGHFERTGNRHDLAVEPPAPTVLKKLVDEQGGEVISVGKIADIYAHVGITKKVKATGLDALFDATVGEMKSAPDNSIVFTNFVDFDSAWGHRRDIPGYAAGLELFDRRLPELMALVKEGDILILTADHGCDPSWPGTEHTREHIPVLIFGPGVRPGDYGYRDTFADIGQTLAHYFGLSPMAYGKPFF.

The Mn(2+) site is built by Asp10, Asp306, His311, Asp347, His348, and His359.

This sequence belongs to the phosphopentomutase family. Mn(2+) serves as cofactor.

It is found in the cytoplasm. It carries out the reaction 2-deoxy-alpha-D-ribose 1-phosphate = 2-deoxy-D-ribose 5-phosphate. The catalysed reaction is alpha-D-ribose 1-phosphate = D-ribose 5-phosphate. It participates in carbohydrate degradation; 2-deoxy-D-ribose 1-phosphate degradation; D-glyceraldehyde 3-phosphate and acetaldehyde from 2-deoxy-alpha-D-ribose 1-phosphate: step 1/2. Isomerase that catalyzes the conversion of deoxy-ribose 1-phosphate (dRib-1-P) and ribose 1-phosphate (Rib-1-P) to deoxy-ribose 5-phosphate (dRib-5-P) and ribose 5-phosphate (Rib-5-P), respectively. The sequence is that of Phosphopentomutase from Erwinia tasmaniensis (strain DSM 17950 / CFBP 7177 / CIP 109463 / NCPPB 4357 / Et1/99).